We begin with the raw amino-acid sequence, 295 residues long: Probable lipid kinase YegS-like (295 aa).

The DAGKc domain occupies 1-129 (MQGRKAMLVL…IDLGQAGDQL (129 aa)). ATP contacts are provided by residues Thr39, 65–71 (GDGTLRD), and Thr92. Mg(2+) is bound by residues Met210, Asp213, and Leu215. The active-site Proton acceptor is the Glu264.

The protein belongs to the diacylglycerol/lipid kinase family. YegS lipid kinase subfamily. Mg(2+) is required as a cofactor. The cofactor is Ca(2+).

The protein localises to the cytoplasm. Functionally, probably phosphorylates lipids; the in vivo substrate is unknown. The polypeptide is Probable lipid kinase YegS-like (Pseudomonas putida (strain ATCC 47054 / DSM 6125 / CFBP 8728 / NCIMB 11950 / KT2440)).